The chain runs to 295 residues: MSLRAVPGYFAAYPSEGFQGLDSTKYDHLELINHKNWKELYHAIPRNTKNRHYKLLILARHGQGYHNAAILRYGMEKWDAYWSLLSGDEHGEWLDSKLTPLGKDQVRRTGSNVLLPMAKQLGMLPHVFFSSPMRRCLETFIESWTPVLAETQELPAGTKISTRIIEGLRETLGSHTCDKRVAHSMAVDEYQDFSTESGHTVHWQYVPDYPEDDELWLPDHRETCAEMDKRTLNGLFELFNQLSSEEKFISLTCHSGVIQSVLRNLQHPPIYNLDTGKVVAVVVEVPVNTADRGRL.

The active-site Tele-phosphohistidine intermediate is the H61. The active-site Proton donor/acceptor is E170.

The protein belongs to the phosphoglycerate mutase family.

It localises to the cytoplasm. Its subcellular location is the nucleus. Probable phosphomutase that may have a function related to the manipulation of phosphate groups on carbohydrates. Reduces trehalose-6-phosphate levels when overexpressed in TPS2-deleted cells. Reduces 5'-Phosphoribosyl-4-carboxamide-5-aminoimidazole (AICAR) levels, a metabolic intermediate at the crossroads between AMP and histidine biosynthesis pathways, when overexpressed in a ADE3-ADE16-ADE17 triple deletant. The sequence is that of Probable phosphoglycerate mutase PMU1 from Saccharomyces cerevisiae (strain ATCC 204508 / S288c) (Baker's yeast).